Consider the following 620-residue polypeptide: Threonine--tRNA ligase (620 aa).

An editing domain region spans residues 1 to 141 (MKMLLIHSDY…LSRKIVAKEE (141 aa)). Residues 197-496 (PHVKFIKEKD…AEKGNAPMLP (300 aa)) form a catalytic region. The Zn(2+) site is built by Cys-289, His-341, and His-465.

The protein belongs to the class-II aminoacyl-tRNA synthetase family. Homodimer. It depends on Zn(2+) as a cofactor.

The protein resides in the cytoplasm. The enzyme catalyses tRNA(Thr) + L-threonine + ATP = L-threonyl-tRNA(Thr) + AMP + diphosphate + H(+). With respect to regulation, not inhibited by 1 uM borrelidin (BN); probably does not bind BN. In terms of biological role, catalyzes the attachment of threonine to tRNA(Thr) in a two-step reaction: L-threonine is first activated by ATP to form Thr-AMP and then transferred to the acceptor end of tRNA(Thr). Also activates L-serine, but does not detectably transfer it to tRNA(Thr). Edits incorrectly charged L-seryl-tRNA(Thr) via its editing domain. Has no activity on correctly acylated L-seryl-tRNA(Ser) or L-threonyl-tRNA(Thr). Deacylates correctly charged glycyl-tRNA(Gly), but not glycyl-tRNA(Gly)(2'-dA76) (the terminal 2'-OH of tRNA adenine 76 has been dehydroxylated) nor the 2'-fluoro tRNA derivative, strongly suggesting the editing function is tRNA catalyzed. The protein is Threonine--tRNA ligase of Methanocaldococcus jannaschii (strain ATCC 43067 / DSM 2661 / JAL-1 / JCM 10045 / NBRC 100440) (Methanococcus jannaschii).